The following is a 139-amino-acid chain: Holo-[acyl-carrier-protein] synthase (139 aa).

Positions 8 and 61 each coordinate Mg(2+).

The protein belongs to the P-Pant transferase superfamily. AcpS family. The cofactor is Mg(2+).

Its subcellular location is the cytoplasm. The enzyme catalyses apo-[ACP] + CoA = holo-[ACP] + adenosine 3',5'-bisphosphate + H(+). Functionally, transfers the 4'-phosphopantetheine moiety from coenzyme A to a Ser of acyl-carrier-protein. This chain is Holo-[acyl-carrier-protein] synthase, found in Rhodopseudomonas palustris (strain BisA53).